A 536-amino-acid chain; its full sequence is MTKYIFVTGGVVSSIGKGIVAASLGRLLKNRGLKVTIQKFDPYINIDPGTMSPYQHGEVYVTDDGAETDLDLGHYERFIDINLNKYSNVTTGKIYSEVLRKERKGEYLGATVQVIPHITDALKEKIKRAATTTDSDVIITEVGGTVGDIESLPFLEALRQMKADVGADNVMYIHTTLLPYLKAAGEMKTKPTQHSVKELRGLGIQPNMLVIRTEQPAGQGIKNKLAQFCDVAPEAVIESLDVDHLYQIPLNLQAQNMDQIVCDHLKLDVPVADMTEWSAMVDKVMNLKKKTKIALVGKYVELPDAYLSVVEALKHSGYVNDTAIDLNWINANEVTPETVTDLLGDADGIIVPGGFGHRGTEGKIEAIRYARENDVPMLGICLGMQLTCVEYARHVLNLEGANSAELDPDTKYPVIDIMRDQIDIEDMGGTLRLGLYPCKLKSGSKTASAYSNQEVVQRRHRHRYEFNNAFRQQFEEAGFVFSGVSPDNRLVEVVELSDKKFFVAAQYHPELQSRPNRPEELYTAFITAAVENSQAH.

The tract at residues 1–267 (MTKYIFVTGG…DQIVCDHLKL (267 aa)) is amidoligase domain. A CTP-binding site is contributed by Ser13. Residue Ser13 participates in UTP binding. Position 14-19 (14-19 (SIGKGI)) interacts with ATP. Position 54 (Tyr54) interacts with L-glutamine. ATP is bound at residue Asp71. Residues Asp71 and Glu141 each coordinate Mg(2+). CTP contacts are provided by residues 148 to 150 (DIE), 188 to 193 (KTKPTQ), and Lys224. Residues 188-193 (KTKPTQ) and Lys224 contribute to the UTP site. Positions 292–535 (KIALVGKYVE…ITAAVENSQA (244 aa)) constitute a Glutamine amidotransferase type-1 domain. Gly354 contacts L-glutamine. The active-site Nucleophile; for glutamine hydrolysis is the Cys381. L-glutamine contacts are provided by residues 382 to 385 (LGMQ), Glu405, and Arg463. Residues His508 and Glu510 contribute to the active site.

This sequence belongs to the CTP synthase family. In terms of assembly, homotetramer.

The enzyme catalyses UTP + L-glutamine + ATP + H2O = CTP + L-glutamate + ADP + phosphate + 2 H(+). It carries out the reaction L-glutamine + H2O = L-glutamate + NH4(+). The catalysed reaction is UTP + NH4(+) + ATP = CTP + ADP + phosphate + 2 H(+). It participates in pyrimidine metabolism; CTP biosynthesis via de novo pathway; CTP from UDP: step 2/2. With respect to regulation, allosterically activated by GTP, when glutamine is the substrate; GTP has no effect on the reaction when ammonia is the substrate. The allosteric effector GTP functions by stabilizing the protein conformation that binds the tetrahedral intermediate(s) formed during glutamine hydrolysis. Inhibited by the product CTP, via allosteric rather than competitive inhibition. Its function is as follows. Catalyzes the ATP-dependent amination of UTP to CTP with either L-glutamine or ammonia as the source of nitrogen. Regulates intracellular CTP levels through interactions with the four ribonucleotide triphosphates. The sequence is that of CTP synthase from Streptococcus mutans serotype c (strain ATCC 700610 / UA159).